A 466-amino-acid chain; its full sequence is 3-isopropylmalate dehydratase large subunit (466 aa).

[4Fe-4S] cluster-binding residues include Cys-347, Cys-407, and Cys-410.

The protein belongs to the aconitase/IPM isomerase family. LeuC type 1 subfamily. In terms of assembly, heterodimer of LeuC and LeuD. [4Fe-4S] cluster serves as cofactor.

The enzyme catalyses (2R,3S)-3-isopropylmalate = (2S)-2-isopropylmalate. Its pathway is amino-acid biosynthesis; L-leucine biosynthesis; L-leucine from 3-methyl-2-oxobutanoate: step 2/4. Catalyzes the isomerization between 2-isopropylmalate and 3-isopropylmalate, via the formation of 2-isopropylmaleate. The protein is 3-isopropylmalate dehydratase large subunit of Shewanella pealeana (strain ATCC 700345 / ANG-SQ1).